The sequence spans 589 residues: Protein kinase G11A (589 aa).

The disordered stretch occupies residues 1 to 167 (MASKAMPRAP…SACSSISSVT (167 aa)). 2 stretches are compositionally biased toward polar residues: residues 15-36 (NLQS…SPSK) and 63-76 (TQHQ…TGSN). Positions 91 to 100 (RLADEEKGVV) are enriched in basic and acidic residues. Positions 142 to 165 (SSSRCRPSTSSDVSDESACSSISS) are enriched in low complexity. The Protein kinase domain maps to 195 to 533 (FKLLKKLGCG…ATEIKQHPFF (339 aa)). Residues 201-209 (LGCGDIGSV) and Lys224 each bind ATP. Asp320 acts as the Proton acceptor in catalysis. The tract at residues 551 to 589 (RPVEIERPPKQPVSTSEPAAAPSDAAQKSSDSYLEFDFF) is disordered.

It belongs to the protein kinase superfamily. Ser/Thr protein kinase family.

It catalyses the reaction L-seryl-[protein] + ATP = O-phospho-L-seryl-[protein] + ADP + H(+). The enzyme catalyses L-threonyl-[protein] + ATP = O-phospho-L-threonyl-[protein] + ADP + H(+). Functionally, may play a role in the regulation of metabolism and signal transduction processes. This is Protein kinase G11A from Oryza sativa subsp. japonica (Rice).